The chain runs to 307 residues: tRNA dimethylallyltransferase (307 aa).

ATP is bound at residue 8–15; that stretch reads GPTGSGKS. 10–15 is a binding site for substrate; that stretch reads TGSGKS. The segment at 33–36 is interaction with substrate tRNA; that stretch reads DSLQ.

The protein belongs to the IPP transferase family. As to quaternary structure, monomer. Requires Mg(2+) as cofactor.

The enzyme catalyses adenosine(37) in tRNA + dimethylallyl diphosphate = N(6)-dimethylallyladenosine(37) in tRNA + diphosphate. Functionally, catalyzes the transfer of a dimethylallyl group onto the adenine at position 37 in tRNAs that read codons beginning with uridine, leading to the formation of N6-(dimethylallyl)adenosine (i(6)A). The sequence is that of tRNA dimethylallyltransferase from Solibacter usitatus (strain Ellin6076).